The primary structure comprises 258 residues: Imidazole glycerol phosphate synthase subunit HisF (258 aa).

Active-site residues include Asp11 and Asp130.

It belongs to the HisA/HisF family. As to quaternary structure, heterodimer of HisH and HisF.

The protein localises to the cytoplasm. The catalysed reaction is 5-[(5-phospho-1-deoxy-D-ribulos-1-ylimino)methylamino]-1-(5-phospho-beta-D-ribosyl)imidazole-4-carboxamide + L-glutamine = D-erythro-1-(imidazol-4-yl)glycerol 3-phosphate + 5-amino-1-(5-phospho-beta-D-ribosyl)imidazole-4-carboxamide + L-glutamate + H(+). It participates in amino-acid biosynthesis; L-histidine biosynthesis; L-histidine from 5-phospho-alpha-D-ribose 1-diphosphate: step 5/9. Functionally, IGPS catalyzes the conversion of PRFAR and glutamine to IGP, AICAR and glutamate. The HisF subunit catalyzes the cyclization activity that produces IGP and AICAR from PRFAR using the ammonia provided by the HisH subunit. This Citrobacter koseri (strain ATCC BAA-895 / CDC 4225-83 / SGSC4696) protein is Imidazole glycerol phosphate synthase subunit HisF.